The primary structure comprises 338 residues: HTH-type transcriptional regulator SyrM 1 (338 aa).

Residues 35–92 (LDLNTLLALEALLEHRNVTQAARHLGLSQPSVSRALIRLRGVFNDDLLVRGSSGMVPT) form the HTH lysR-type domain. Residues 52-72 (VTQAARHLGLSQPSVSRALIR) constitute a DNA-binding region (H-T-H motif).

The protein belongs to the LysR transcriptional regulatory family.

Transcriptional activator that regulates the expression of genes involved in symbiosis. Among other targets it acts on the nolWBTUV operon. In Sinorhizobium fredii (strain NBRC 101917 / NGR234), this protein is HTH-type transcriptional regulator SyrM 1 (syrM1).